A 153-amino-acid chain; its full sequence is Movement protein (153 aa).

Disordered stretches follow at residues methionine 1–proline 24 and proline 121–arginine 153. Over residues proline 121–serine 138 the composition is skewed to polar residues.

The protein belongs to the luteoviruses movement protein family.

Its function is as follows. Transports viral genome to neighboring plant cells directly through plasmosdesmata, without any budding. The movement protein allows efficient cell to cell propagation, by bypassing the host cell wall barrier. This Avena byzantina (Oat) protein is Movement protein.